The sequence spans 121 residues: Putative membrane protein insertion efficiency factor (121 aa).

The interval 97–121 is disordered; sequence VPARRDRHAGGRRCCPANVDEQRST.

This sequence belongs to the UPF0161 family.

It localises to the cell membrane. In terms of biological role, could be involved in insertion of integral membrane proteins into the membrane. The sequence is that of Putative membrane protein insertion efficiency factor from Rhodococcus jostii (strain RHA1).